A 246-amino-acid chain; its full sequence is 3-deoxy-manno-octulosonate cytidylyltransferase (246 aa).

It belongs to the KdsB family.

It is found in the cytoplasm. The enzyme catalyses 3-deoxy-alpha-D-manno-oct-2-ulosonate + CTP = CMP-3-deoxy-beta-D-manno-octulosonate + diphosphate. Its pathway is nucleotide-sugar biosynthesis; CMP-3-deoxy-D-manno-octulosonate biosynthesis; CMP-3-deoxy-D-manno-octulosonate from 3-deoxy-D-manno-octulosonate and CTP: step 1/1. It functions in the pathway bacterial outer membrane biogenesis; lipopolysaccharide biosynthesis. Its function is as follows. Activates KDO (a required 8-carbon sugar) for incorporation into bacterial lipopolysaccharide in Gram-negative bacteria. This is 3-deoxy-manno-octulosonate cytidylyltransferase from Rickettsia akari (strain Hartford).